A 272-amino-acid chain; its full sequence is Serine/arginine-rich splicing factor 5 (272 aa).

Positions 4-74 (CRVFIGRLNP…ERVTIEHARA (71 aa)) constitute an RRM 1 domain. A disordered region spans residues 73 to 105 (RARSRGGRGRGRYSDRFSSRRPRNDRRNAPPVR). Over residues 74 to 83 (ARSRGGRGRG) the composition is skewed to basic residues. Residue serine 86 is modified to Phosphoserine. The RRM 2 domain maps to 108-181 (NRLIVENLSS…RKIKLIEGSK (74 aa)). Residue lysine 167 is modified to N6-acetyllysine. A disordered region spans residues 174-272 (IKLIEGSKRH…SRSRSVDSGN (99 aa)). Basic residues predominate over residues 182 to 229 (RHSRSRSRSRSRTRSSSRSRSRSRSRSRKSYSRSRSRSRSRSRSKSRS). Phosphoserine occurs at positions 227, 229, 233, 250, and 253. Residues 242–254 (RGSSSRSKSPASV) are compositionally biased toward low complexity.

This sequence belongs to the splicing factor SR family. Interacts (via RS domain) with PHF5A (via N-terminus). Found in a pre-mRNA splicing complex with SRSF4/SFRS4, SRSF5/SFRS5, SNRNP70, SNRPA1, SRRM1 and SRRM2. In terms of processing, extensively phosphorylated on serine residues in the RS domain.

It localises to the nucleus. In terms of biological role, plays a role in constitutive splicing and can modulate the selection of alternative splice sites. The polypeptide is Serine/arginine-rich splicing factor 5 (SRSF5) (Homo sapiens (Human)).